Consider the following 573-residue polypeptide: Solute carrier family 41 member 2 (573 aa).

Over 1-162 the chain is Extracellular; it reads MTNCKGRSTI…KESSSIMALQ (162 aa). The helical transmembrane segment at 163–183 threads the bilayer; it reads ILVPFLLAGFGTVTAGMVLDI. The Cytoplasmic portion of the chain corresponds to 184–195; the sequence is VQHWDVFKNVTE. Residues 196 to 216 form a helical membrane-spanning segment; the sequence is VFILVPALLGLKGNLEMTLAS. Residues 217-245 are Extracellular-facing; the sequence is RLSTAVNIGKMDSPIEKWNLIIGNLALKQ. The helical transmembrane segment at 246 to 266 threads the bilayer; that stretch reads VQATVVGFLAAVAAVILGWIP. At 267-282 the chain is on the cytoplasmic side; that stretch reads EGKYSFSHSILLCSSS. The helical transmembrane segment at 283 to 303 threads the bilayer; the sequence is VATAFIASLLQGIIMVGVIVG. The Extracellular segment spans residues 304-313; sequence SKKTGINPDN. The helical transmembrane segment at 314 to 334 threads the bilayer; the sequence is VATPIAASFGDLITLAILAWI. At 335 to 347 the chain is on the cytoplasmic side; that stretch reads SQGLYTCLETYYY. Residues 348–368 form a helical membrane-spanning segment; it reads VSPLVGAFFLALTPMGIVIAA. The Extracellular portion of the chain corresponds to 369–376; that stretch reads KHPATRTV. The helical transmembrane segment at 377 to 397 threads the bilayer; that stretch reads LHSGWEPVITAMIISSIGGLI. Residues 398–406 lie on the Cytoplasmic side of the membrane; it reads LDTTVSDPN. Residues 407 to 427 traverse the membrane as a helical segment; that stretch reads LVGIVVYTPVINGIGGNLVAI. Topologically, residues 428–469 are extracellular; the sequence is QASRISTYLHLHSIPGELPEEAKGCYYPCRTYYGTGVNNKSA. Residues 470-490 form a helical membrane-spanning segment; that stretch reads QVLLLLVIPGHLIFLYTIHLM. Residues 491 to 499 are Cytoplasmic-facing; that stretch reads KSGHTSLTP. A helical transmembrane segment spans residues 500 to 520; sequence IFIAVYLFAALLQVFTLLWIA. Residues 521–543 are Extracellular-facing; it reads DWMVHHFWKKGKDPDSFSIPYLT. Residues 544–564 traverse the membrane as a helical segment; that stretch reads ALGDLLGTALLAVGFHFLWLI. Residues 565 to 573 lie on the Cytoplasmic side of the membrane; the sequence is GDRDGDVGD.

This sequence belongs to the SLC41A transporter family.

It localises to the cell membrane. It catalyses the reaction Mg(2+)(in) = Mg(2+)(out). It carries out the reaction Mn(2+)(in) = Mn(2+)(out). The enzyme catalyses Co(2+)(in) = Co(2+)(out). The catalysed reaction is Ni(2+)(in) = Ni(2+)(out). It catalyses the reaction Fe(2+)(in) = Fe(2+)(out). In terms of biological role, acts as a plasma-membrane magnesium transporter. Can also mediate the transport of other divalent metal cations in an order of Ba(2+) &gt; Ni(2+) &gt; Co(2+) &gt; Fe(2+) &gt; Mn(2+). The sequence is that of Solute carrier family 41 member 2 (SLC41A2) from Gallus gallus (Chicken).